The primary structure comprises 306 residues: Ribosomal protein L11 methyltransferase (306 aa).

The S-adenosyl-L-methionine site is built by threonine 139, glycine 173, aspartate 195, and asparagine 242.

Belongs to the methyltransferase superfamily. PrmA family.

It is found in the cytoplasm. It carries out the reaction L-lysyl-[protein] + 3 S-adenosyl-L-methionine = N(6),N(6),N(6)-trimethyl-L-lysyl-[protein] + 3 S-adenosyl-L-homocysteine + 3 H(+). Its function is as follows. Methylates ribosomal protein L11. This chain is Ribosomal protein L11 methyltransferase, found in Trichormus variabilis (strain ATCC 29413 / PCC 7937) (Anabaena variabilis).